Here is a 155-residue protein sequence, read N- to C-terminus: SsrA-binding protein (155 aa).

It belongs to the SmpB family.

It is found in the cytoplasm. In terms of biological role, required for rescue of stalled ribosomes mediated by trans-translation. Binds to transfer-messenger RNA (tmRNA), required for stable association of tmRNA with ribosomes. tmRNA and SmpB together mimic tRNA shape, replacing the anticodon stem-loop with SmpB. tmRNA is encoded by the ssrA gene; the 2 termini fold to resemble tRNA(Ala) and it encodes a 'tag peptide', a short internal open reading frame. During trans-translation Ala-aminoacylated tmRNA acts like a tRNA, entering the A-site of stalled ribosomes, displacing the stalled mRNA. The ribosome then switches to translate the ORF on the tmRNA; the nascent peptide is terminated with the 'tag peptide' encoded by the tmRNA and targeted for degradation. The ribosome is freed to recommence translation, which seems to be the essential function of trans-translation. The protein is SsrA-binding protein of Streptococcus pyogenes serotype M4 (strain MGAS10750).